Consider the following 561-residue polypeptide: Inositol phosphate phosphatase SopB (561 aa).

Cys460 is a catalytic residue. The CX5R motif motif lies at 460–466 (CKSGKDR).

This sequence belongs to the phosphatase IpgD/SopB family.

It localises to the secreted. Its function is as follows. Converts phosphatidylinositol 3,4,5-trisphosphate (PtdIns 3,4,5-P3) to PtdIns 3-P and prevents the transition of PtdIns 3-P to PtdIns 3,5-P2. It is one of the known effectors injected by Salmonella into the host cell and is required for invasion and for an efficient generation and maintenance of Salmonella-containing vacuole (SVC). Alteration of the phosphoinositide composition of the plasma membrane causes membrane ruffling and actin cytoskeleton rearrangements. The persistence of PtdIns 3-P diverts the SCV from the endocytic pathway resulting in enlarged vesicles, which are essential to create a favorable environment where Salmonella can replicate and avoid immune defenses of the host cell. The sequence is that of Inositol phosphate phosphatase SopB (sopB) from Salmonella typhimurium (strain LT2 / SGSC1412 / ATCC 700720).